A 415-amino-acid polypeptide reads, in one-letter code: MLRSKGDLVLGCSFCGKKEDERRRIVTGHGVSICNYCVERCAEYLRDRKPSALALMTKEEIPTPLELKAYLDQYVIGQDLAKRVLSVAVYNHYKRVAGRSLDIDSVLIEKSNVLLIGPTGSGKTLLAKTLSQKMKVPFAIADATTLTEAGYVGEDVENILLKLVQNANGDVALAERGIIFIDEIDKISRKSENVSITRDVSGEGVQQALLKIIEGTIASVPPQGGRKHPNQDMLRVDTSNILFICGGAFVGLDGIVGTRVCKNPVGFGADVKTVKERGLQLMHEDVIPDDLVKFGLIPEIIGRLPVTVALDALSKEDLRNILVRPRNAIVRQFEALFALDDVRLVFDEDALDAIAQQAIDQKTGARGLRSIVERLMLDAMFEAPSLKGKKELCITKKVVTQEEKASVRLVSERTA.

Residues 1 to 53 (MLRSKGDLVLGCSFCGKKEDERRRIVTGHGVSICNYCVERCAEYLRDRKPSAL) form the ClpX-type ZB domain. The Zn(2+) site is built by cysteine 12, cysteine 15, cysteine 34, and cysteine 37. 118–125 (PTGSGKTL) lines the ATP pocket.

This sequence belongs to the ClpX chaperone family. As to quaternary structure, component of the ClpX-ClpP complex. Forms a hexameric ring that, in the presence of ATP, binds to fourteen ClpP subunits assembled into a disk-like structure with a central cavity, resembling the structure of eukaryotic proteasomes.

ATP-dependent specificity component of the Clp protease. It directs the protease to specific substrates. Can perform chaperone functions in the absence of ClpP. The sequence is that of ATP-dependent Clp protease ATP-binding subunit ClpX from Treponema pallidum (strain Nichols).